The chain runs to 671 residues: MESIEQQLTELRTTLRHHEYLYHVMDAPEIPDAEYDRLMRELRELETKHPELITPDSPTQRVGAAPLAAFSQIRHEVPMLSLDNVFDEESFLAFNKRVQDRLKSNEKVTWCCELKLDGLAVSILYENGVLVSAATRGDGTTGEDITSNVRTIRAIPLKLHGENIPARLEVRGEVFLPQAGFEKINEDARRTGGKVFANPRNAAAGSLRQLDPRITAKRPLTFFCYGVGVLEGGELPDTHLGRLLQFKKWGLPVSDRVTLCESAEEVLAFYHKVEEDRPTLGFDIDGVVIKVNSLAQQEQLGFVARAPRWAVAFKFPAQEQMTFVRDVEFQVGRTGAITPVARLEPVHVAGVLVSNATLHNADEIERLGLRIGDKVVIRRAGDVIPQVVNVVLSERPEDTREVVFPTHCPVCGSDVERVEGEAVARCTGGLICGAQRKESLKHFVSRRAMDVDGMGDKIIDQLVEKEYVHTPADLFKLTAGKLTGLERMGPKSAQNVVNALEKAKETTFARFLYALGIREVGEATAAGLAAYFGTLEALEAASIEELQKVPDVGIVVASHVHNFFAEESNRNVISELLAEGVHWPEPIVINAEEIDSPFAGKTVVLTGSLSQMSRDDAKARLVELGAKVAGSVSKKTDLVIAGEAAGSKLAKAQELGIEVIDETEMLRLLGS.

Residues 32-36 (DAEYD), 81-82 (SL), and Glu-113 contribute to the NAD(+) site. The N6-AMP-lysine intermediate role is filled by Lys-115. NAD(+) contacts are provided by Arg-136, Glu-173, Lys-290, and Lys-314. The Zn(2+) site is built by Cys-408, Cys-411, Cys-426, and Cys-432. A BRCT domain is found at 593 to 671 (EIDSPFAGKT…ETEMLRLLGS (79 aa)).

Belongs to the NAD-dependent DNA ligase family. LigA subfamily. The cofactor is Mg(2+). Mn(2+) serves as cofactor.

It carries out the reaction NAD(+) + (deoxyribonucleotide)n-3'-hydroxyl + 5'-phospho-(deoxyribonucleotide)m = (deoxyribonucleotide)n+m + AMP + beta-nicotinamide D-nucleotide.. Functionally, DNA ligase that catalyzes the formation of phosphodiester linkages between 5'-phosphoryl and 3'-hydroxyl groups in double-stranded DNA using NAD as a coenzyme and as the energy source for the reaction. It is essential for DNA replication and repair of damaged DNA. The protein is DNA ligase of Escherichia coli O6:H1 (strain CFT073 / ATCC 700928 / UPEC).